An 822-amino-acid polypeptide reads, in one-letter code: uncharacterized protein (822 aa).

Residues 1–230 are disordered; it reads MARGKRSTQR…NAAPLNKTDA (230 aa). Phosphoserine is present on serine 27. A compositionally biased stretch (basic residues) spans 34-44; sequence SKAKKNKKKLN. A phosphoserine mark is found at serine 47, serine 51, and serine 55. Phosphotyrosine is present on tyrosine 57. The span at 61-70 shows a compositional bias: acidic residues; the sequence is PEDDEVDEEV. Residues 73-85 show a composition bias toward basic residues; the sequence is VKKKPSKKSKKAK. Residues 92-106 are compositionally biased toward acidic residues; that stretch reads FADEQSVEEEEEEDS. Serine 97 carries the post-translational modification Phosphoserine. Residues 111-121 are compositionally biased toward basic residues; sequence RKNKKSSKKAS. Acidic residues-rich tracts occupy residues 129–144 and 163–172; these read LADD…EESE and SEALDDGDIE. Phosphoserine is present on residues serine 137 and serine 163. ABC transporter domains lie at 276 to 519 and 594 to 809; these read LQVE…VQLA and IKFQ…AKER. Residues 308–315 and 627–634 contribute to the ATP site; these read APNGSGKS and GPNGAGKT.

This sequence belongs to the ABC transporter superfamily.

The protein localises to the cytoplasm. This is an uncharacterized protein from Schizosaccharomyces pombe (strain 972 / ATCC 24843) (Fission yeast).